The primary structure comprises 283 residues: MKHSFSRLFGLGDKEEEAEIAEHDTNKEEIQEIPVGDIIPNRFQPRTIFSEEKIKELAATIHTHGIIQPIVVRKTEREGQYELIAGERRWRAVQTLDWEKVPAIIKDFSDTETASVALIENLQREELSSIEEAHAYARLLELHDLTQEALAQRLGKGQSTIANKLRLLKLPEEVQEAILKKEISERHARALIPLKQPDLQVKLLHEVIEKSLNVKQTEDRVVKMLEQDKRKPKPKRKAYSRDARIAMNTIRQSLSMVEDSGVKLNTEEEEFEEYIQFTIRIPK.

A DNA-binding region (H-T-H motif) is located at residues 148–167; sequence EALAQRLGKGQSTIANKLRL.

This sequence belongs to the ParB family.

It is found in the cytoplasm. The protein resides in the nucleoid. Effects nucleoid occlusion by binding relatively nonspecifically to DNA and preventing the assembly of the division machinery in the vicinity of the nucleoid, especially under conditions that disturb the cell cycle. It helps to coordinate cell division and chromosome segregation by preventing the formation of the Z ring through the nucleoid, which would cause chromosome breakage. This chain is Nucleoid occlusion protein, found in Bacillus licheniformis (strain ATCC 14580 / DSM 13 / JCM 2505 / CCUG 7422 / NBRC 12200 / NCIMB 9375 / NCTC 10341 / NRRL NRS-1264 / Gibson 46).